We begin with the raw amino-acid sequence, 200 residues long: Golgi to ER traffic protein 1 (200 aa).

The Lumenal segment spans residues 1–6 (MEPYTL). Residues 7-26 (LLFIFVIQIVKQIISAVGKQ) traverse the membrane as a helical segment. The Cytoplasmic segment spans residues 27-113 (SIESISWVLY…KVNTFTGYLI (87 aa)). Residues 75-107 (AKWTKLNRQHDKLVAEIEQLQKEVDLDKVKVNT) adopt a coiled-coil conformation. Residues 114–134 (AILTSIPIWFFRVWYRSVVLF) form a helical membrane-spanning segment. The Lumenal segment spans residues 135 to 158 (YFPPGILPRALEWSIALPFTVTGG). A helical membrane pass occupies residues 159–175 (VSLTVWMMAAGAVASSL). The Cytoplasmic segment spans residues 176-200 (TFLFMFPFEKAVPKPVLAKKSPQQL).

The protein belongs to the WRB/GET1 family. In terms of assembly, component of the Golgi to ER traffic (GET) complex, which is composed of GET1, GET2 and GET3. Within the complex, GET1 and GET2 form a heterotetramer which is stabilized by phosphatidylinositol binding and which binds to the GET3 homodimer.

It localises to the endoplasmic reticulum membrane. The protein localises to the golgi apparatus membrane. Functionally, required for the post-translational delivery of tail-anchored (TA) proteins to the endoplasmic reticulum. Together with GET2, acts as a membrane receptor for soluble GET3, which recognizes and selectively binds the transmembrane domain of TA proteins in the cytosol. The GET complex cooperates with the HDEL receptor ERD2 to mediate the ATP-dependent retrieval of resident ER proteins that contain a C-terminal H-D-E-L retention signal from the Golgi to the ER. This chain is Golgi to ER traffic protein 1, found in Meyerozyma guilliermondii (strain ATCC 6260 / CBS 566 / DSM 6381 / JCM 1539 / NBRC 10279 / NRRL Y-324) (Yeast).